We begin with the raw amino-acid sequence, 496 residues long: Probable malate:quinone oxidoreductase (496 aa).

Belongs to the MQO family. It depends on FAD as a cofactor.

The catalysed reaction is (S)-malate + a quinone = a quinol + oxaloacetate. It functions in the pathway carbohydrate metabolism; tricarboxylic acid cycle; oxaloacetate from (S)-malate (quinone route): step 1/1. The sequence is that of Probable malate:quinone oxidoreductase from Flavobacterium psychrophilum (strain ATCC 49511 / DSM 21280 / CIP 103535 / JIP02/86).